Here is a 62-residue protein sequence, read N- to C-terminus: Photosystem II reaction center protein Z (62 aa).

Transmembrane regions (helical) follow at residues 8 to 28 (LVVALIVYSFVLIVAVPITLS) and 41 to 61 (VTASIGWVGMVLLTGVLNSFV).

This sequence belongs to the PsbZ family. PSII is composed of 1 copy each of membrane proteins PsbA, PsbB, PsbC, PsbD, PsbE, PsbF, PsbH, PsbI, PsbJ, PsbK, PsbL, PsbM, PsbT, PsbX, PsbY, PsbZ, Psb30/Ycf12, at least 3 peripheral proteins of the oxygen-evolving complex and a large number of cofactors. It forms dimeric complexes.

The protein resides in the plastid. It is found in the chloroplast thylakoid membrane. In terms of biological role, may control the interaction of photosystem II (PSII) cores with the light-harvesting antenna, regulates electron flow through the 2 photosystem reaction centers. PSII is a light-driven water plastoquinone oxidoreductase, using light energy to abstract electrons from H(2)O, generating a proton gradient subsequently used for ATP formation. This chain is Photosystem II reaction center protein Z, found in Cyanidioschyzon merolae (strain NIES-3377 / 10D) (Unicellular red alga).